Consider the following 66-residue polypeptide: Large ribosomal subunit protein bL35 (66 aa).

This sequence belongs to the bacterial ribosomal protein bL35 family.

This is Large ribosomal subunit protein bL35 from Acholeplasma laidlawii (strain PG-8A).